A 114-amino-acid chain; its full sequence is UPF0342 protein LVIS_1488 (114 aa).

The protein belongs to the UPF0342 family.

The chain is UPF0342 protein LVIS_1488 from Levilactobacillus brevis (strain ATCC 367 / BCRC 12310 / CIP 105137 / JCM 1170 / LMG 11437 / NCIMB 947 / NCTC 947) (Lactobacillus brevis).